Reading from the N-terminus, the 282-residue chain is Bis(5'-nucleosyl)-tetraphosphatase, symmetrical (282 aa).

This sequence belongs to the Ap4A hydrolase family.

It catalyses the reaction P(1),P(4)-bis(5'-adenosyl) tetraphosphate + H2O = 2 ADP + 2 H(+). Hydrolyzes diadenosine 5',5'''-P1,P4-tetraphosphate to yield ADP. In Burkholderia pseudomallei (strain 668), this protein is Bis(5'-nucleosyl)-tetraphosphatase, symmetrical.